The chain runs to 396 residues: Elongation factor Tu (396 aa).

The 196-residue stretch at 10–205 folds into the tr-type G domain; that stretch reads KPHVNIGTIG…ACDESIPDPV (196 aa). Residues 19 to 26 are G1; sequence GHVDHGKT. Position 19-26 (19-26) interacts with GTP; it reads GHVDHGKT. T26 is a binding site for Mg(2+). A G2 region spans residues 62 to 66; it reads GITIN. Positions 83-86 are G3; sequence DAPG. Residues 83–87 and 138–141 each bind GTP; these read DAPGH and NKCD. Residues 138–141 form a G4 region; it reads NKCD. Residues 175-177 are G5; sequence SAL.

It belongs to the TRAFAC class translation factor GTPase superfamily. Classic translation factor GTPase family. EF-Tu/EF-1A subfamily. Monomer.

The protein localises to the cytoplasm. The enzyme catalyses GTP + H2O = GDP + phosphate + H(+). Functionally, GTP hydrolase that promotes the GTP-dependent binding of aminoacyl-tRNA to the A-site of ribosomes during protein biosynthesis. This Corynebacterium kroppenstedtii (strain DSM 44385 / JCM 11950 / CIP 105744 / CCUG 35717) protein is Elongation factor Tu.